Here is a 438-residue protein sequence, read N- to C-terminus: Adenylyltransferase and sulfurtransferase MOCS3 (438 aa).

ATP contacts are provided by residues glycine 80, aspartate 101, 108 to 112 (TNLHR), lysine 125, and 169 to 170 (DN). Positions 210 and 213 each coordinate Zn(2+). The Glycyl thioester intermediate; for adenylyltransferase activity role is filled by cysteine 227. Zn(2+) contacts are provided by cysteine 285 and cysteine 288. The region spanning 335–436 (SKQRHVLVDV…WTRNVDKEFP (102 aa)) is the Rhodanese domain. Cysteine 392 serves as the catalytic Cysteine persulfide intermediate; for sulfurtransferase activity.

The protein in the N-terminal section; belongs to the HesA/MoeB/ThiF family. UBA4 subfamily. Requires Zn(2+) as cofactor.

The protein localises to the cytoplasm. Its subcellular location is the cytosol. It carries out the reaction [molybdopterin-synthase sulfur-carrier protein]-C-terminal Gly-Gly + ATP + H(+) = [molybdopterin-synthase sulfur-carrier protein]-C-terminal Gly-Gly-AMP + diphosphate. It catalyses the reaction [molybdopterin-synthase sulfur-carrier protein]-C-terminal Gly-Gly-AMP + S-sulfanyl-L-cysteinyl-[cysteine desulfurase] + AH2 = [molybdopterin-synthase sulfur-carrier protein]-C-terminal-Gly-aminoethanethioate + L-cysteinyl-[cysteine desulfurase] + A + AMP + 2 H(+). It participates in tRNA modification; 5-methoxycarbonylmethyl-2-thiouridine-tRNA biosynthesis. The protein operates within cofactor biosynthesis; molybdopterin biosynthesis. Its function is as follows. Plays a central role in 2-thiolation of mcm(5)S(2)U at tRNA wobble positions of cytosolic tRNA(Lys), tRNA(Glu) and tRNA(Gln). Also essential during biosynthesis of the molybdenum cofactor. Acts by mediating the C-terminal thiocarboxylation of sulfur carriers URM1 and MOCS2A. Its N-terminus first activates URM1 and MOCS2A as acyl-adenylates (-COAMP), then the persulfide sulfur on the catalytic cysteine is transferred to URM1 and MOCS2A to form thiocarboxylation (-COSH) of their C-terminus. The reaction probably involves hydrogen sulfide that is generated from the persulfide intermediate and that acts as a nucleophile towards URM1 and MOCS2A. Subsequently, a transient disulfide bond is formed. Does not use thiosulfate as sulfur donor; NFS1 probably acting as a sulfur donor for thiocarboxylation reactions. The protein is Adenylyltransferase and sulfurtransferase MOCS3 of Culex quinquefasciatus (Southern house mosquito).